Here is a 124-residue protein sequence, read N- to C-terminus: Non-structural protein 2 (124 aa).

The DLNP; interaction with MAP1B motif lies at 121-124 (DLNP).

Belongs to the pneumovirus non-structural protein 2 family. In terms of assembly, monomer (instable). Homomultimer. Heteromultimer with NS1. Interacts with host RIGI (via N-terminus); this interaction prevents host signaling pathway involved in interferon production. Interacts with host MAP1B/microtubule-associated protein 1B.

The protein resides in the host mitochondrion. Plays a major role in antagonizing the type I IFN-mediated antiviral response. Acts cooperatively with NS1 to repress activation and nuclear translocation of host IFN-regulatory factor IRF3. Interacts with the host cytoplasmic sensor of viral nucleic acids RIGI and prevents the interaction with its downstream partner MAVS. Together with NS2, participates in the proteasomal degradation of host STAT2, IRF3, IRF7, TBK1 and RIGI through a NS-degradasome involving CUL2 and Elongin-C. The degradasome requires an intact mitochondrial MAVS. Induces host SOCS1 expression. Induces activation of NF-kappa-B. Suppresses premature apoptosis by an NF-kappa-B-dependent, interferon-independent mechanism promoting continued viral replication. The chain is Non-structural protein 2 (1B) from Human respiratory syncytial virus B (strain 18537).